The primary structure comprises 555 residues: Beta-fructofuranosidase, cell wall isozyme (555 aa).

The N-terminal stretch at 1–22 (MAISSIFLLSLFSLIYVIPIEA) is a signal peptide. Residues 58–61 (WIND), Q77, W85, and 120–121 (WS) contribute to the substrate site. D61 is a catalytic residue. Residue D140 is part of the active site. N154 and N181 each carry an N-linked (GlcNAc...) asparagine glycan. Substrate contacts are provided by residues 186–187 (RD), E241, and D277. N-linked (GlcNAc...) asparagine glycosylation occurs at N337. C435 and C481 are oxidised to a cystine.

Belongs to the glycosyl hydrolase 32 family.

The catalysed reaction is Hydrolysis of terminal non-reducing beta-D-fructofuranoside residues in beta-D-fructofuranosides.. The chain is Beta-fructofuranosidase, cell wall isozyme (BFRUCT1) from Pisum sativum (Garden pea).